The chain runs to 267 residues: Hydroxyethylthiazole kinase 2 (267 aa).

Methionine 41 provides a ligand contact to substrate. ATP-binding residues include lysine 116 and threonine 166. Glycine 193 is a binding site for substrate.

The protein belongs to the Thz kinase family. Mg(2+) is required as a cofactor.

The enzyme catalyses 5-(2-hydroxyethyl)-4-methylthiazole + ATP = 4-methyl-5-(2-phosphooxyethyl)-thiazole + ADP + H(+). Its pathway is cofactor biosynthesis; thiamine diphosphate biosynthesis; 4-methyl-5-(2-phosphoethyl)-thiazole from 5-(2-hydroxyethyl)-4-methylthiazole: step 1/1. Catalyzes the phosphorylation of the hydroxyl group of 4-methyl-5-beta-hydroxyethylthiazole (THZ). The polypeptide is Hydroxyethylthiazole kinase 2 (Streptococcus pneumoniae (strain P1031)).